The sequence spans 668 residues: tRNA 5-methylaminomethyl-2-thiouridine biosynthesis bifunctional protein MnmC (668 aa).

Residues 1–245 (MKHYSIQPAN…KREMLCGVME (245 aa)) form a tRNA (mnm(5)s(2)U34)-methyltransferase region. An FAD-dependent cmnm(5)s(2)U34 oxidoreductase region spans residues 270–668 (IGGGIASALL…LLKGKAVKAG (399 aa)).

In the N-terminal section; belongs to the methyltransferase superfamily. tRNA (mnm(5)s(2)U34)-methyltransferase family. It in the C-terminal section; belongs to the DAO family. FAD serves as cofactor.

The protein localises to the cytoplasm. It carries out the reaction 5-aminomethyl-2-thiouridine(34) in tRNA + S-adenosyl-L-methionine = 5-methylaminomethyl-2-thiouridine(34) in tRNA + S-adenosyl-L-homocysteine + H(+). Functionally, catalyzes the last two steps in the biosynthesis of 5-methylaminomethyl-2-thiouridine (mnm(5)s(2)U) at the wobble position (U34) in tRNA. Catalyzes the FAD-dependent demodification of cmnm(5)s(2)U34 to nm(5)s(2)U34, followed by the transfer of a methyl group from S-adenosyl-L-methionine to nm(5)s(2)U34, to form mnm(5)s(2)U34. In Escherichia coli (strain UTI89 / UPEC), this protein is tRNA 5-methylaminomethyl-2-thiouridine biosynthesis bifunctional protein MnmC.